The sequence spans 1055 residues: DNA-directed RNA polymerase subunit beta' (1055 aa).

Positions 60, 62, 75, and 78 each coordinate Zn(2+). D449, D451, and D453 together coordinate Mg(2+). C818, C892, C899, and C902 together coordinate Zn(2+).

The protein belongs to the RNA polymerase beta' chain family. As to quaternary structure, the RNAP catalytic core consists of 2 alpha, 1 beta, 1 beta' and 1 omega subunit. When a sigma factor is associated with the core the holoenzyme is formed, which can initiate transcription. The cofactor is Mg(2+). Requires Zn(2+) as cofactor.

The enzyme catalyses RNA(n) + a ribonucleoside 5'-triphosphate = RNA(n+1) + diphosphate. DNA-dependent RNA polymerase catalyzes the transcription of DNA into RNA using the four ribonucleoside triphosphates as substrates. This chain is DNA-directed RNA polymerase subunit beta', found in Pediococcus acidilactici.